The chain runs to 302 residues: DNA-binding transcriptional activator HetR (302 aa).

Residue S153 is part of the active site.

This sequence belongs to the peptidase S48 family. Homodimer; disulfide-linked.

In terms of biological role, might be involved in temporal and/or spatial regulation of nitrogen fixation. Dimerization is required for DNA-binding. Has both a protease and a DNA-binding activity. The sequence is that of DNA-binding transcriptional activator HetR from Trichodesmium erythraeum (strain IMS101).